The primary structure comprises 102 residues: Salivary protein Salp9 (102 aa).

Positions 1–21 (MGLTEIMLVLVSLAFVATAAA) are cleaved as a signal peptide. Residues Asn-26 and Asn-87 are each glycosylated (N-linked (GlcNAc...) asparagine). Residues 83–102 (SGVPNDTDAKIEETEEELEA) are disordered.

The protein belongs to the salp14 family. Salivary gland (at protein level). Saliva (at protein level). Midgut.

Its subcellular location is the secreted. Functionally, salivary protein that facilitates blood feeding of adult ticks on vertebrate species. Inhibits the lectin pathway of complement system activation in the host. The chain is Salivary protein Salp9 from Ixodes scapularis (Black-legged tick).